Here is a 245-residue protein sequence, read N- to C-terminus: tRNA pseudouridine synthase A 2 (245 aa).

Residue Asp53 is the Nucleophile of the active site. Position 111 (Tyr111) interacts with substrate.

The protein belongs to the tRNA pseudouridine synthase TruA family. In terms of assembly, homodimer.

It catalyses the reaction uridine(38/39/40) in tRNA = pseudouridine(38/39/40) in tRNA. In terms of biological role, formation of pseudouridine at positions 38, 39 and 40 in the anticodon stem and loop of transfer RNAs. The protein is tRNA pseudouridine synthase A 2 of Bacillus cereus (strain ZK / E33L).